Here is a 117-residue protein sequence, read N- to C-terminus: Immunity protein BC_0921 (117 aa).

Probably interacts with cognate toxin BC_0920 but not with other non-cognate toxins. The interaction inhibits the toxic activity of BC_0920.

Its subcellular location is the cytoplasm. In terms of biological role, immunity component of an LXG toxin-immunity module. Neutralizes the RNase activity of cognate toxin BC_0920. Probably does not have immunity protein activity on other toxins with the LXG domain. The sequence is that of Immunity protein BC_0921 from Bacillus cereus (strain ATCC 14579 / DSM 31 / CCUG 7414 / JCM 2152 / NBRC 15305 / NCIMB 9373 / NCTC 2599 / NRRL B-3711).